A 514-amino-acid chain; its full sequence is Zinc finger CCCH-type with G patch domain-containing protein (514 aa).

The disordered stretch occupies residues 96-129; that stretch reads GEEPQPPGAGDGASTGSKDSEEEEEEEDGSSGMK. The segment covering 115–124 has biased composition (acidic residues); the sequence is SEEEEEEEDG. Residues 171 to 197 form a C3H1-type zinc finger; the sequence is KAMKPCPFFLDGKCRFDDSCRFSHGQV. 3 disordered regions span residues 262–288, 363–422, and 494–514; these read IPPLRGSDSSSSDDDDDDEEEDDAAED, QQRK…AAER, and EEHSLQREQRKADTHKKMTEF. Residues 272–287 show a composition bias toward acidic residues; sequence SSDDDDDDEEEDDAAE. The G-patch domain maps to 315 to 373; it reads TRGIGSKLLARMGYEIGKGLGRNAEGRVEPIQAVLLPKGKSLDQCIEMQQRKKAGGKRE. Residues 365 to 383 are compositionally biased toward basic residues; sequence RKKAGGKREHKAGKRRPRA.

The protein localises to the nucleus. Transcription repressor that specifically binds the 5'-GGAG[GA]A[GA]A-3' consensus sequence. Represses transcription by recruiting the chromatin multiprotein complex NuRD to target promoters. Negatively regulates expression of EGFR, a gene involved in cell proliferation, survival and migration. The chain is Zinc finger CCCH-type with G patch domain-containing protein (zgpat) from Xenopus tropicalis (Western clawed frog).